A 202-amino-acid chain; its full sequence is 3-isopropylmalate dehydratase small subunit (202 aa).

The protein belongs to the LeuD family. LeuD type 1 subfamily. Heterodimer of LeuC and LeuD.

It carries out the reaction (2R,3S)-3-isopropylmalate = (2S)-2-isopropylmalate. It functions in the pathway amino-acid biosynthesis; L-leucine biosynthesis; L-leucine from 3-methyl-2-oxobutanoate: step 2/4. In terms of biological role, catalyzes the isomerization between 2-isopropylmalate and 3-isopropylmalate, via the formation of 2-isopropylmaleate. The polypeptide is 3-isopropylmalate dehydratase small subunit (Caulobacter vibrioides (strain ATCC 19089 / CIP 103742 / CB 15) (Caulobacter crescentus)).